The following is a 455-amino-acid chain: Argininosuccinate lyase (455 aa).

Belongs to the lyase 1 family. Argininosuccinate lyase subfamily.

It is found in the cytoplasm. The catalysed reaction is 2-(N(omega)-L-arginino)succinate = fumarate + L-arginine. The protein operates within amino-acid biosynthesis; L-arginine biosynthesis; L-arginine from L-ornithine and carbamoyl phosphate: step 3/3. This is Argininosuccinate lyase from Caulobacter sp. (strain K31).